We begin with the raw amino-acid sequence, 241 residues long: C-type lectin domain family 9 member A (241 aa).

Residues 1 to 34 are Cytoplasmic-facing; that stretch reads MHEEEIYTSLQWDIPTSEASQKCPSLSKCPGTWC. Positions 5 to 10 match the ITAM-like motif; sequence EIYTSL. A helical; Signal-anchor for type II membrane protein membrane pass occupies residues 35–55; sequence IVTVISCVVCVGLLAASIFLG. Topologically, residues 56–241 are extracellular; it reads IKFSQVSSLV…CEKKAFGSCI (186 aa). Asparagine 81 and asparagine 88 each carry an N-linked (GlcNAc...) asparagine glycan. Cysteines 113 and 124 form a disulfide. The C-type lectin domain occupies 120–233; sequence NGKSCYYAFD…CSNWKYFICE (114 aa). Residues asparagine 135, asparagine 161, and asparagine 223 are each glycosylated (N-linked (GlcNAc...) asparagine). Cystine bridges form between cysteine 141–cysteine 232 and cysteine 211–cysteine 224.

Homodimer. Post-translationally, N-glycosylated. As to expression, high expression in the spleen, moderate to low levels in several other tissues and cell types, but no detectable expression in skin dendritic cells or CD4(+) T-cells.

Its subcellular location is the membrane. Functionally, functions as an endocytic receptor on a small subset of myeloid cells specialized for the uptake and processing of material from dead cells. Recognizes filamentous form of actin in association with particular actin-binding domains of cytoskeletal proteins, including spectrin, exposed when cell membranes are damaged, and mediate the cross-presentation of dead-cell associated antigens in a Syk-dependent manner. The polypeptide is C-type lectin domain family 9 member A (Clec9a) (Rattus norvegicus (Rat)).